The sequence spans 288 residues: Quinate/shikimate dehydrogenase (288 aa).

Positions 71 and 107 each coordinate substrate. NAD(+) is bound by residues 132-135 (AGGA), 155-158 (NRRD), K205, 232-235 (CVYN), and G255.

The protein belongs to the shikimate dehydrogenase family. In terms of assembly, homodimer.

It catalyses the reaction L-quinate + NAD(+) = 3-dehydroquinate + NADH + H(+). The enzyme catalyses L-quinate + NADP(+) = 3-dehydroquinate + NADPH + H(+). The catalysed reaction is shikimate + NADP(+) = 3-dehydroshikimate + NADPH + H(+). It carries out the reaction shikimate + NAD(+) = 3-dehydroshikimate + NADH + H(+). The protein operates within metabolic intermediate biosynthesis; chorismate biosynthesis; chorismate from D-erythrose 4-phosphate and phosphoenolpyruvate: step 4/7. Its function is as follows. The actual biological function of YdiB remains unclear, nor is it known whether 3-dehydroshikimate or quinate represents the natural substrate. Catalyzes the reversible NAD-dependent reduction of both 3-dehydroshikimate (DHSA) and 3-dehydroquinate to yield shikimate (SA) and quinate, respectively. It can use both NAD or NADP for catalysis, however it has higher catalytic efficiency with NAD. The sequence is that of Quinate/shikimate dehydrogenase from Shigella flexneri.